The chain runs to 677 residues: MTQVAKKILVTCALPYANGSIHLGHMLEHIQADVWVRYQRMRGHEVNFICADDAHGTPIMLKAQQLGITPEQMIGEMSQEHQTDFAGFDISYDNYHSTHSDENRELSELIYTRLKENGFIKNRTISQLYDPEKGMFLPDRFVKGTCPKCKSPDQYGDNCEVCGATYSPTELIDPKSVVSGATPVMRDSEHFFFDLPSFSEMLQAWTRSGALQEQVANKMQEWFESGLQQWDISRDAPYFGFEIPNAPGKYFYVWLDAPIGYMGSFKNLCDKRGDTTSFDEYWKKDSSAELYHFIGKDIVYFHSLFWPAMLEGSNFRKPTNLFVHGYVTVNGAKMSKSRGTFIKASTWLNHFDADSLRYYYTAKLSSRIDDIDLNLEDFVQRVNADIVNKVVNLASRNAGFISKRFDGVLAAELADPALYKTFTDAAESIGEAWDSREFGKAIREIMALADVANRYVDEQAPWVVAKQEGRDADLQAICTMGLNMFRVLMTWLKPVLPQLAARAEAFLNSELSWDAIQQPLLAHKVNPFKALYNRIEMKQVEALVEASKEEVKATAAPVTGPLADDPIQETITFDDFAKVDLRVALIENAEFVEGSDKLLRLTLDLGGEKRNVFSGIRSAYPDPQPLIGRLTVMVANLAPRKMRFGISEGMVMAAGPGGKDIFLLSPDDGAKPGQQVK.

A 'HIGH' region motif is present at residues 15–25 (PYANGSIHLGH). Zn(2+) is bound by residues Cys146, Cys149, Cys159, and Cys162. A 'KMSKS' region motif is present at residues 333–337 (KMSKS). Lys336 serves as a coordination point for ATP. The tRNA-binding domain maps to 575 to 677 (DFAKVDLRVA…DGAKPGQQVK (103 aa)).

Belongs to the class-I aminoacyl-tRNA synthetase family. MetG type 1 subfamily. As to quaternary structure, homodimer. It depends on Zn(2+) as a cofactor.

Its subcellular location is the cytoplasm. It carries out the reaction tRNA(Met) + L-methionine + ATP = L-methionyl-tRNA(Met) + AMP + diphosphate. Is required not only for elongation of protein synthesis but also for the initiation of all mRNA translation through initiator tRNA(fMet) aminoacylation. The sequence is that of Methionine--tRNA ligase from Klebsiella pneumoniae (strain 342).